The primary structure comprises 423 residues: Transcription factor bHLH14 (423 aa).

Residues 192–243 are disordered; the sequence is GKTTKHTNQTGSYPKPAVSDHSKSGNQQFGSERKRRRKLETTRVAAATKEKH. A bHLH domain is found at 245–294; sequence PAVLSHVEAEKQRREKLNHRFYALRAIVPKVSRMDKASLLSDAVSYIESL. The segment at 312-343 is disordered; the sequence is ETDKLDNSSSNTSPSSVEYQVNQKPSKSNRGS. Residues 318–327 show a composition bias toward low complexity; it reads NSSSNTSPSS. A compositionally biased stretch (polar residues) spans 328-342; sequence VEYQVNQKPSKSNRG.

As to quaternary structure, homodimer.

It localises to the nucleus. The polypeptide is Transcription factor bHLH14 (BHLH14) (Arabidopsis thaliana (Mouse-ear cress)).